The following is a 389-amino-acid chain: MKFVDEAVIKVQAGDGGNGVVSFWREKFVTKGGPDGGDGGDGGDVYIQADENLNTLIDYRFQRFYEAERGQNGSGGNCTGKRGKDITLRVPVGTRAVDIHTNEIVAEVAEHGKKVMVAKGGWHGLGNTRFKSSVNRAPRQKTMGTKGEIRELRLELLLLADVGMLGLPNAGKSTFIRAVFAAKPKVADYPFTTLIPSLGVVSVVPEKSFVVADIPGLIEGAADGAGLGIRFLKHLERCRVLLHMIDIFPIDQSDPVQNALTIIDELEQYSEKLANKPRWLVFNKVDLVSEEQADEIIQEVIDALGWEEQYFKISAVNRQGTKELCYKLADFMEQLPREEQEVSEEEKVNFMWDYHPDANQGEVITEDDDDDWDDWDDEEDDGHVIYVRE.

Residues 1-159 form the Obg domain; sequence MKFVDEAVIK…RELRLELLLL (159 aa). The OBG-type G domain occupies 160-333; the sequence is ADVGMLGLPN…LCYKLADFME (174 aa). GTP is bound by residues 166–173, 191–195, 213–216, 283–286, and 314–316; these read GLPNAGKS, FTTLI, DIPG, NKVD, and SAV. The Mg(2+) site is built by serine 173 and threonine 193. The disordered stretch occupies residues 359–389; it reads NQGEVITEDDDDDWDDWDDEEDDGHVIYVRE. Positions 364–381 are enriched in acidic residues; sequence ITEDDDDDWDDWDDEEDD.

It belongs to the TRAFAC class OBG-HflX-like GTPase superfamily. OBG GTPase family. Monomer. Mg(2+) is required as a cofactor.

The protein resides in the cytoplasm. Functionally, an essential GTPase which binds GTP, GDP and possibly (p)ppGpp with moderate affinity, with high nucleotide exchange rates and a fairly low GTP hydrolysis rate. Plays a role in control of the cell cycle, stress response, ribosome biogenesis and in those bacteria that undergo differentiation, in morphogenesis control. This Vibrio vulnificus (strain CMCP6) protein is GTPase Obg.